Reading from the N-terminus, the 408-residue chain is Cytotoxic granule-associated RNA binding protein tiar-1 (408 aa).

RRM domains follow at residues 46–121 (RTLY…WAVE), 135–213 (FHVF…WATR), and 241–312 (TSVY…WGKT).

Expressed in the germline and also in somatic tissues. Expressed in Ggonads and oocytes. Expression is slightly reduced in the most proximal oocytes, especially the -1 oocyte. Aggregates mostly in the head neurons, muscles, intestine, vulval and hypodermal cells during heat shock. Expressed only in the intestine as a response to heat shock, starvation and dietary restriction.

It localises to the cytoplasm. The protein resides in the nucleus. It is found in the stress granule. Its function is as follows. Acts downstream of ced-9 in the induction of germline apoptosis under different stress conditions including starvation, osmotic, oxidative, heat shock and UV stress. Plays a role in the formation of stress granules in response to heat shock and oxidative stress but not in response to osmotic stress. Required for the formation of stress granules in the core gonad but may not play a critical role in this process in the oocytes. Plays an important role in the formation of stress granules in the embryo. Protects female germ cells and embryos from heat shock. In Caenorhabditis elegans, this protein is Cytotoxic granule-associated RNA binding protein tiar-1.